A 190-amino-acid polypeptide reads, in one-letter code: Elongation factor P (190 aa).

Belongs to the elongation factor P family.

It localises to the cytoplasm. It functions in the pathway protein biosynthesis; polypeptide chain elongation. In terms of biological role, involved in peptide bond synthesis. Stimulates efficient translation and peptide-bond synthesis on native or reconstituted 70S ribosomes in vitro. Probably functions indirectly by altering the affinity of the ribosome for aminoacyl-tRNA, thus increasing their reactivity as acceptors for peptidyl transferase. The protein is Elongation factor P of Hyphomonas neptunium (strain ATCC 15444).